Here is a 234-residue protein sequence, read N- to C-terminus: Carbohydrate deacetylase (234 aa).

Mg(2+)-binding residues include H60 and H123.

Belongs to the YdjC deacetylase family. Mg(2+) serves as cofactor.

Functionally, probably catalyzes the deacetylation of acetylated carbohydrates an important step in the degradation of oligosaccharides. The protein is Carbohydrate deacetylase of Bacillus anthracis.